A 277-amino-acid chain; its full sequence is Cation-dependent mannose-6-phosphate receptor (277 aa).

The signal sequence occupies residues 1–26; that stretch reads MFPFYSCWRTGLLLLLLAVAVRESWQ. Over 27–185 the chain is Lumenal; sequence TEEKTCDLVG…SLACSPEISH (159 aa). The 152-residue stretch at 30-181 folds into the MRH domain; sequence KTCDLVGEKG…EMDSSLACSP (152 aa). The cysteines at positions 32 and 78 are disulfide-linked. N57, N83, N94, N107, and N113 each carry an N-linked (GlcNAc...) asparagine glycan. 2 cysteine pairs are disulfide-bonded: C132/C167 and C145/C179. A helical transmembrane segment spans residues 186–210; that stretch reads LSVGSILLVTFASLVAVYVVGGFLY. Residues 211–277 are Cytoplasmic-facing; the sequence is QRLVVGAKGM…EERDDHLLPM (67 aa). The disordered stretch occupies residues 256-277; it reads RGVGDDQLGEESEERDDHLLPM. Phosphoserine is present on S267.

In terms of assembly, homodimer. Binds GGA1, GGA2 and GGA3.

Its subcellular location is the lysosome membrane. In terms of biological role, transport of phosphorylated lysosomal enzymes from the Golgi complex and the cell surface to lysosomes. Lysosomal enzymes bearing phosphomannosyl residues bind specifically to mannose-6-phosphate receptors in the Golgi apparatus and the resulting receptor-ligand complex is transported to an acidic prelyosomal compartment where the low pH mediates the dissociation of the complex. This chain is Cation-dependent mannose-6-phosphate receptor (M6PR), found in Homo sapiens (Human).